A 136-amino-acid chain; its full sequence is Histone H3.Y (136 aa).

Residues 1 to 16 (MARTKQTARKATAWQA) are compositionally biased toward low complexity. Residues 1-43 (MARTKQTARKATAWQAPRKPLATKAAGKRAPPTGGIKKPHRYK) are disordered. An Asymmetric dimethylarginine modification is found at R3. R3 carries the post-translational modification Citrulline; alternate. T4 is modified (phosphothreonine). K5 is modified (allysine; alternate). K5 bears the N6,N6,N6-trimethyllysine; alternate mark. K5 is subject to N6,N6-dimethyllysine; alternate. K5 is subject to N6-(2-hydroxyisobutyryl)lysine; alternate. K5 carries the post-translational modification N6-(beta-hydroxybutyryl)lysine; alternate. K5 bears the N6-acetyllysine; alternate mark. The residue at position 5 (K5) is an N6-crotonyllysine; alternate. Position 5 is an N6-methyllysine; alternate (K5). At Q6 the chain carries 5-glutamyl dopamine; alternate. A 5-glutamyl serotonin; alternate modification is found at Q6. Phosphothreonine is present on T7. A Citrulline; alternate modification is found at R9. The residue at position 9 (R9) is a Symmetric dimethylarginine. K10 is subject to N6,N6,N6-trimethyllysine; alternate. N6,N6-dimethyllysine; alternate is present on K10. K10 carries the post-translational modification N6-(2-hydroxyisobutyryl)lysine; alternate. K10 is modified (N6-(beta-hydroxybutyryl)lysine; alternate). N6-acetyllysine; alternate is present on K10. At K10 the chain carries N6-crotonyllysine; alternate. K10 carries the N6-methyllysine; alternate modification. K10 bears the N6-butyryllysine; alternate mark. K10 bears the N6-lactoyllysine; alternate mark. Residue T12 is modified to Phosphothreonine. The residue at position 18 (R18) is an Asymmetric dimethylarginine. The residue at position 18 (R18) is a Citrulline; alternate. N6-(2-hydroxyisobutyryl)lysine; alternate occurs at positions 19, 24, 28, and 37. N6-(beta-hydroxybutyryl)lysine; alternate is present on residues K19, K24, and K28. An N6-acetyllysine; alternate mark is found at K19, K24, K28, and K37. N6-crotonyllysine; alternate occurs at positions 19, 24, and 28. N6-methyllysine; alternate occurs at positions 19, 24, 28, and 37. N6-butyryllysine; alternate is present on residues K19 and K24. K19, K24, and K28 each carry N6-lactoyllysine; alternate. 3 positions are modified to N6-glutaryllysine; alternate: K19, K24, and K28. 2 positions are modified to N6,N6,N6-trimethyllysine; alternate: K28 and K37. N6,N6-dimethyllysine; alternate is present on residues K28 and K37. K38 carries the N6-methyllysine modification. Y42 is subject to Phosphotyrosine. The residue at position 57 (K57) is an N6,N6,N6-trimethyllysine; alternate. K57 carries the N6-(2-hydroxyisobutyryl)lysine; alternate modification. Residue K57 is modified to N6-(beta-hydroxybutyryl)lysine; alternate. K57 is subject to N6-acetyllysine; alternate. K57 bears the N6-crotonyllysine; alternate mark. The residue at position 57 (K57) is an N6-lactoyllysine; alternate. K57 is modified (N6-glutaryllysine; alternate). An N6-methyllysine modification is found at K57. K57 carries the N6-succinyllysine; alternate modification. Phosphoserine is present on S58. N6-(2-hydroxyisobutyryl)lysine; alternate is present on K65. N6-methyllysine; alternate is present on K65. S87 carries the phosphoserine modification. Residue T108 is modified to Phosphothreonine.

Belongs to the histone H3 family. As to quaternary structure, the nucleosome is a histone octamer containing two molecules each of H2A, H2B, H3 and H4 assembled in one H3-H4 heterotetramer and two H2A-H2B heterodimers. The octamer wraps approximately 147 bp of DNA. Interacts with HIRA, a chaperone required for its incorporation into nucleosomes. Does not interact with DAXX chaperone. Acetylation is generally linked to gene activation. Acetylation on Lys-10 (H3K9ac) impairs methylation at Arg-9 (H3R8me2s). Acetylation on Lys-19 (H3K18ac) and Lys-24 (H3K24ac) favors methylation at Arg-18 (H3R17me). In terms of processing, citrullination at Arg-9 (H3R8ci) and/or Arg-18 (H3R17ci) impairs methylation and represses transcription. Post-translationally, asymmetric dimethylation at Arg-18 (H3R17me2a) is linked to gene activation. Symmetric dimethylation at Arg-9 (H3R8me2s) is linked to gene repression. Asymmetric dimethylation at Arg-3 (H3R2me2a) is linked to gene repression and is mutually exclusive with H3 Lys-5 methylation (H3K4me2 and H3K4me3). H3R2me2a is present at the 3' of genes regardless of their transcription state and is enriched on inactive promoters, while it is absent on active promoters. Methylation at Lys-5 (H3K4me) facilitates subsequent acetylation of H3 and H4. Methylation at Lys-10 (H3K9me) and Lys-28 (H3K27me), which are linked to gene repression, are underrepresented. Methylation at Lys-10 (H3K9me) is a specific target for HP1 proteins (CBX1, CBX3 and CBX5) and prevents subsequent acetylation of H3 and H4. In terms of processing, phosphorylation at Thr-7 (H3T6ph) is a specific tag for epigenetic transcriptional activation that prevents demethylation of Lys-5 (H3K4me) by LSD1/KDM1A. At centromeres, specifically phosphorylated at Thr-12 (H3T11ph) from prophase to early anaphase. Phosphorylation at Thr-12 (H3T11ph) is a specific tag for epigenetic transcriptional activation that promotes demethylation of Lys-10 (H3K9me). Phosphorylation at Tyr-42 (H3Y41ph) promotes exclusion of CBX5 (HP1 alpha) from chromatin. Post-translationally, lysine deamination at Lys-5 (H3K4all) to form allysine. Allysine formation only takes place on H3K4me3 and results in gene repression. Crotonylation (Kcr) is specifically present in male germ cells and marks testis-specific genes in post-meiotic cells, including X-linked genes that escape sex chromosome inactivation in haploid cells. Crotonylation marks active promoters and enhancers and confers resistance to transcriptional repressors. It is also associated with post-meiotically activated genes on autosomes. In terms of processing, butyrylation of histones marks active promoters and competes with histone acetylation. It is present during late spermatogenesis. Expressed at low level in some tissues, such as testis and brain.

The protein resides in the nucleus. It localises to the chromosome. In terms of biological role, primate-specific variant histone H3, which constitutes a core component of nucleosomes. Histone H3.Y-containing nucleosomes accumulate around transcription start sites and have flexible DNA ends, suggesting that they form relaxed chromatin that allows transcription factor access. Histone H1 binds less efficiently to histone H3.Y-containing nucleosomes. Nucleosomes wrap and compact DNA into chromatin, limiting DNA accessibility to the cellular machineries which require DNA as a template. Histones thereby play a central role in transcription regulation, DNA repair, DNA replication and chromosomal stability. DNA accessibility is regulated via a complex set of post-translational modifications of histones, also called histone code, and nucleosome remodeling. In Homo sapiens (Human), this protein is Histone H3.Y.